Consider the following 241-residue polypeptide: Beta-nerve growth factor (241 aa).

Residues 1 to 18 form the signal peptide; that stretch reads MSMLFYTLITAFLIGVQA. The propeptide occupies 19-121; the sequence is EPYTDSNVPE…SFNRTHRSKR (103 aa). Asparagine 69, asparagine 114, and asparagine 166 each carry an N-linked (GlcNAc...) asparagine glycan. 3 disulfides stabilise this stretch: cysteine 136–cysteine 201, cysteine 179–cysteine 229, and cysteine 189–cysteine 231. The a 1-acyl-sn-glycero-3-phospho-(1D-myo-inositol) site is built by tyrosine 173 and lysine 209. Lysine 209 contributes to the a 1-acyl-sn-glycero-3-phospho-L-serine binding site.

This sequence belongs to the NGF-beta family. In terms of assembly, homodimer. The homodimer interacts with a single NTRK1 chain. The homodimer interacts with a single NGFR chain. The NGF dimer interacts with a single SORCS2 chain (via extracellular domain). The NGF precursor (proNGF) binds to a receptor complex formed by SORT1 and NGFR, which leads to NGF endocytosis. Both mature NGF and the immature NGF precursor (proNGF) interact with SORCS2 and with the heterodimer formed by SORCS2 and NGFR (via extracellular domains). The NGF precursor (proNGF) has much higher affinity for SORCS2 than mature NGF. The NGF precursor (proNGF) has much higher affinity for SORT1 than mature NGF. Interacts with ADAM10 in a divalent cation-dependent manner. Interacts with SORCS3. As to expression, detected in the granule and pyramidal cell layer in the hippocampus.

The protein localises to the secreted. It localises to the endosome lumen. In terms of biological role, nerve growth factor is important for the development and maintenance of the sympathetic and sensory nervous systems. Extracellular ligand for the NTRK1 and NGFR receptors, activates cellular signaling cascades to regulate neuronal proliferation, differentiation and survival. The immature NGF precursor (proNGF) functions as a ligand for the heterodimeric receptor formed by SORCS2 and NGFR, and activates cellular signaling cascades that lead to inactivation of RAC1 and/or RAC2, reorganization of the actin cytoskeleton and neuronal growth cone collapse. In contrast to mature NGF, the precursor form (proNGF) promotes neuronal apoptosis (in vitro). Inhibits metalloproteinase-dependent proteolysis of platelet glycoprotein VI. Binds lysophosphatidylinositol and lysophosphatidylserine between the two chains of the homodimer. The lipid-bound form promotes histamine relase from mast cells, contrary to the lipid-free form. This chain is Beta-nerve growth factor (Ngf), found in Rattus norvegicus (Rat).